We begin with the raw amino-acid sequence, 456 residues long: Choline kinase (456 aa).

It belongs to the choline/ethanolamine kinase family. In terms of assembly, monomer. Mg(2+) serves as cofactor.

It localises to the cytoplasm. Its subcellular location is the nucleus. The enzyme catalyses choline + ATP = phosphocholine + ADP + H(+). It participates in phospholipid metabolism; phosphatidylcholine biosynthesis; phosphocholine from choline: step 1/1. Its function is as follows. Catalyzes the committed step in the synthesis of phosphatidylcholine by the CDP-choline pathway. The protein is Choline kinase of Schizosaccharomyces pombe (strain 972 / ATCC 24843) (Fission yeast).